The chain runs to 186 residues: C-type lectin domain family 19 member A (186 aa).

The N-terminal stretch at 1–19 is a signal peptide; the sequence is MQRWTLWAAAFLTLHSAQA. Residues 47–179 enclose the C-type lectin domain; the sequence is FKGHCYRFFP…CSRKFPFVCK (133 aa). N-linked (GlcNAc...) asparagine glycosylation occurs at Asn-58. Disulfide bonds link Cys-68–Cys-178 and Cys-151–Cys-170.

It is found in the secreted. This Homo sapiens (Human) protein is C-type lectin domain family 19 member A.